Reading from the N-terminus, the 449-residue chain is Uric acid permease PucJ (449 aa).

13 helical membrane-spanning segments follow: residues leucine 11–glycine 31, leucine 41–leucine 61, glycine 67–isoleucine 87, tyrosine 91–alanine 111, valine 119–proline 139, glutamate 158–leucine 178, valine 191–serine 211, alanine 229–valine 249, alanine 277–alanine 297, isoleucine 313–leucine 333, alanine 334–isoleucine 354, leucine 372–phenylalanine 392, and isoleucine 401–phenylalanine 421.

It belongs to the nucleobase:cation symporter-2 (NCS2) (TC 2.A.40) family.

It localises to the cell membrane. In terms of biological role, uptake of uric acid. The protein is Uric acid permease PucJ (pucJ) of Bacillus subtilis (strain 168).